Consider the following 298-residue polypeptide: Probable endonuclease 4 (298 aa).

The Zn(2+) site is built by His69, His111, Glu146, Asp180, His183, His215, Asp228, His230, and Glu260.

This sequence belongs to the AP endonuclease 2 family. It depends on Zn(2+) as a cofactor.

It catalyses the reaction Endonucleolytic cleavage to 5'-phosphooligonucleotide end-products.. Its function is as follows. Endonuclease IV plays a role in DNA repair. It cleaves phosphodiester bonds at apurinic or apyrimidinic (AP) sites, generating a 3'-hydroxyl group and a 5'-terminal sugar phosphate. The protein is Probable endonuclease 4 of Bacillus cereus (strain 03BB102).